Consider the following 653-residue polypeptide: Sodium-dependent nutrient amino acid transporter 1 (653 aa).

Residues 1-55 (MELKGVHQQNGTSNGTGAAGTEGESPPPAPAPATAEAAASLETTTEKVDAEQQKT) are disordered. Residues 1–59 (MELKGVHQQNGTSNGTGAAGTEGESPPPAPAPATAEAAASLETTTEKVDAEQQKTERTN) are Cytoplasmic-facing. Composition is skewed to low complexity over residues 10-24 (NGTSNGTGAAGTEGE) and 32-43 (PATAEAAASLET). Positions 44–55 (TTEKVDAEQQKT) are enriched in basic and acidic residues. 4 helical membrane-spanning segments follow: residues 60-80 (WGNGLEFLMSCISVSVGLGNV), 93-113 (GAFLIPYIIVLFLIGKPMYYL), 125-145 (TVKIWSVVPGFVGVGYGQAFA), and 146-166 (TICIITYYSSLLALTLFYLFV). N-linked (GlcNAc...) asparagine glycans are attached at residues asparagine 202 and asparagine 205. Transmembrane regions (helical) follow at residues 241–261 (PDWKLTLALFVSWVVIFLVIM), 270–290 (AAYFLALFPYVVLFILLVRAV), 319–339 (AVVQCFFSLAVGSGPIIMFAS), 353–373 (IVTTLDTLTSLLGGITIFAIL), 413–433 (LFSVLFFFMLFVLGIGSIVAL), 459–479 (ICGFLMGLVYVTPGGQWILTL), 486–506 (TYVVFILAIFELAGIVWIYGM), 528–548 (CWSFFTPVMMIVIFIYSMVTI), and 565–585 (AGWLLFGIGAAQFPLWWMWYI).

This sequence belongs to the sodium:neurotransmitter symporter (SNF) (TC 2.A.22) family.

The protein resides in the membrane. Its function is as follows. Unusual broad substrate spectrum amino acid:sodium cotransporter that promotes absorption of the D isomers of essential amino acids. Neutral amino acids are the preferred substrates, especially methionine and phenylalanine. This Drosophila pseudoobscura pseudoobscura (Fruit fly) protein is Sodium-dependent nutrient amino acid transporter 1.